The sequence spans 698 residues: Probable microcin-H47 secretion/processing ATP-binding protein MchF (698 aa).

In terms of domain architecture, Peptidase C39 spans 26–145 (QTETAECGLA…RYFTGIALEV (120 aa)). Cys-32 is an active-site residue. The next 5 helical transmembrane spans lie at 33–53 (GLAC…LISL), 90–110 (LGAL…VVLV), 289–311 (TCVV…MLLY), 315–337 (LTWI…YGYY), and 397–417 (LLFG…ILWL). The 283-residue stretch at 176 to 458 (LAKIFCLSVV…LTSFLLQLRI (283 aa)) folds into the ABC transmembrane type-1 domain. The ABC transporter domain maps to 492–698 (LETTDLSYRY…LRTVDRIISI (207 aa)). 526-533 (GASGAGKT) provides a ligand contact to ATP.

The protein belongs to the ABC transporter superfamily.

The protein resides in the cell membrane. Functionally, probably involved, in conjunction with MchE, in the secretion of microcin H47. This is Probable microcin-H47 secretion/processing ATP-binding protein MchF (mchF) from Escherichia coli.